The primary structure comprises 461 residues: Phosphatidate cytidylyltransferase 1 (461 aa).

Residues 1–67 are disordered; it reads MLELRHRGSC…IPEIPPSSDR (67 aa). Arginine 7 carries the post-translational modification Omega-N-methylarginine. The span at 20 to 56 shows a compositional bias: basic and acidic residues; that stretch reads PHREGEAAGGDHETESTSDKETDIDDRYGDLDSRTDS. Serine 35 and serine 37 each carry phosphoserine. 6 consecutive transmembrane segments (helical) span residues 96 to 116, 149 to 169, 183 to 203, 230 to 250, 279 to 299, and 357 to 377; these read MISLFFLIIYMGSFMLMLLVL, FLLCVNYFFYGETVADYFATF, HRFISFALYLAGFCMFVLSLV, LVIQNLFEGMIWFLVPISSVI, GFIGGFFSTVVFGFIAAYVLS, and IALSTFASLIGPFGGFFASGF.

Belongs to the CDS family. Homodimer. Interacts with FOS; this interaction may enhance catalytic activity. Mg(2+) serves as cofactor. As to expression, expressed in adult tissues such as placenta, brain, small intestine, ovary, testis and prostate. Highly expressed in fetal kidney, lung and brain. Lower level in fetal liver.

Its subcellular location is the endoplasmic reticulum membrane. It catalyses the reaction a 1,2-diacyl-sn-glycero-3-phosphate + CTP + H(+) = a CDP-1,2-diacyl-sn-glycerol + diphosphate. The enzyme catalyses 1-octadecanoyl-2-(5Z,8Z,11Z,14Z-eicosatetraenoyl)-sn-glycero-3-phosphate + CTP + H(+) = 1-octadecanoyl-2-(5Z,8Z,11Z,14Z-eicosatetraenoyl)-sn-glycero-3-cytidine-5'-diphosphate + diphosphate. The catalysed reaction is 1-octadecanoyl-2-(9Z,12Z-octadecadienoyl)-sn-glycero-3-phosphate + CTP + H(+) = 1-octadecanoyl-2-(9Z,12Z-octadecadienoyl)-sn-glycero-3-cytidine-5'-diphosphate + diphosphate. It carries out the reaction 1-hexadecanoyl-2-(5Z,8Z,11Z,14Z-eicosatetraenoyl)-sn-glycero-3-phosphate + CTP + H(+) = 1-hexadecanoyl-2-(5Z,8Z,11Z,14Z-eicosatetraenoyl)-sn-glycero-3-cytidine-5'-diphosphate + diphosphate. It catalyses the reaction 1,2-di-(5Z,8Z,11Z,14Z)-eicosatetraenoyl-sn-glycero-3-phosphate + CTP + H(+) = 1,2-di-(5Z,8Z,11Z,14Z-eicosatetraenoyl)-sn-glycero-3-cytidine-5'-diphosphate + diphosphate. The enzyme catalyses 1-octadecanoyl-2-(9Z-octadecenoyl)-sn-glycero-3-phosphate + CTP + H(+) = 1-octadecanoyl-2-(9Z-octadecenoyl)-sn-glycero-3-cytidine-5'-diphosphate + diphosphate. The catalysed reaction is 1-octadecanoyl-2-(4Z,7Z,10Z,13Z,16Z,19Z-docosahexaenoyl)-sn-glycero-3-phosphate + CTP + H(+) = 1-octadecanoyl-2-(4Z,7Z,10Z,13Z,16Z,19Z-docosahexaenoyl)-sn-glycero-3-cytidine-5'-diphosphate + diphosphate. It carries out the reaction 1,2-di-(9Z,12Z-octadecadienoyl)-sn-glycero-3-phosphate + CTP + H(+) = 1,2-di-(9Z,12Z-octadecadienoyl)-sn-glycero-3-cytidine-5'-diphosphate + diphosphate. It catalyses the reaction 1,2-di-(9Z-octadecenoyl)-sn-glycero-3-phosphate + CTP + H(+) = 1,2-di-(9Z-octadecenoyl)-sn-glycero-3-cytidine-5'-diphosphate + diphosphate. Its pathway is phospholipid metabolism; CDP-diacylglycerol biosynthesis; CDP-diacylglycerol from sn-glycerol 3-phosphate: step 3/3. Inhibited by its anionic phospholipid end products, with phosphatidylinositol-(4,5)- bisphosphate showing the strongest inhibition. In terms of biological role, catalyzes the conversion of phosphatidic acid (PA) to CDP-diacylglycerol (CDP-DAG), an essential intermediate in the synthesis of phosphatidylglycerol, cardiolipin and phosphatidylinositol. Exhibits almost no acyl chain preference for PA, showing no discrimination for the sn-1/sn-2 acyl chain composition of PAs. Plays an important role in regulating the growth of lipid droplets which are storage organelles at the center of lipid and energy homeostasis. Positively regulates the differentiation and development of adipocytes. The protein is Phosphatidate cytidylyltransferase 1 of Homo sapiens (Human).